A 66-amino-acid chain; its full sequence is Neurotoxin Cex11 (66 aa).

The region spanning 1–64 (KEGYPVNIYT…SYPYPEKSCG (64 aa)) is the LCN-type CS-alpha/beta domain. 4 disulfide bridges follow: Cys12–Cys63, Cys16–Cys39, Cys25–Cys44, and Cys29–Cys46. Cys63 carries the cysteine amide modification. The propeptide occupies 64-66 (GRK).

The protein belongs to the long (4 C-C) scorpion toxin superfamily. Sodium channel inhibitor family. Beta subfamily. Expressed by the venom gland.

It localises to the secreted. In terms of biological role, beta toxins bind voltage-independently at site-4 of sodium channels (Nav) and shift the voltage of activation toward more negative potentials thereby affecting sodium channel activation and promoting spontaneous and repetitive firing. This Centruroides exilicauda (Bark scorpion) protein is Neurotoxin Cex11.